The sequence spans 150 residues: 3-dehydroquinate dehydratase (150 aa).

Tyrosine 26 serves as the catalytic Proton acceptor. The substrate site is built by asparagine 77, histidine 83, and aspartate 90. Histidine 103 acts as the Proton donor in catalysis. Substrate is bound by residues 104–105 (LS) and arginine 114.

Belongs to the type-II 3-dehydroquinase family. Homododecamer.

The catalysed reaction is 3-dehydroquinate = 3-dehydroshikimate + H2O. Its pathway is metabolic intermediate biosynthesis; chorismate biosynthesis; chorismate from D-erythrose 4-phosphate and phosphoenolpyruvate: step 3/7. In terms of biological role, catalyzes a trans-dehydration via an enolate intermediate. This Photobacterium profundum (strain SS9) protein is 3-dehydroquinate dehydratase.